The chain runs to 442 residues: ORC1-type DNA replication protein 8 (442 aa).

ATP-binding positions include 66-70 (VGKTA) and tyrosine 218.

The protein belongs to the CDC6/cdc18 family.

In terms of biological role, involved in regulation of DNA replication. This Haloarcula marismortui (strain ATCC 43049 / DSM 3752 / JCM 8966 / VKM B-1809) (Halobacterium marismortui) protein is ORC1-type DNA replication protein 8 (cdc6h).